The sequence spans 513 residues: ATP synthase subunit alpha 2 (513 aa).

169 to 176 is an ATP binding site; that stretch reads GDRQVGKT.

The protein belongs to the ATPase alpha/beta chains family. F-type ATPases have 2 components, CF(1) - the catalytic core - and CF(0) - the membrane proton channel. CF(1) has five subunits: alpha(3), beta(3), gamma(1), delta(1), epsilon(1). CF(0) has three main subunits: a(1), b(2) and c(9-12). The alpha and beta chains form an alternating ring which encloses part of the gamma chain. CF(1) is attached to CF(0) by a central stalk formed by the gamma and epsilon chains, while a peripheral stalk is formed by the delta and b chains.

It localises to the cell inner membrane. The catalysed reaction is ATP + H2O + 4 H(+)(in) = ADP + phosphate + 5 H(+)(out). Produces ATP from ADP in the presence of a proton gradient across the membrane. The alpha chain is a regulatory subunit. The sequence is that of ATP synthase subunit alpha 2 from Psychromonas ingrahamii (strain DSM 17664 / CCUG 51855 / 37).